We begin with the raw amino-acid sequence, 98 residues long: Large ribosomal subunit protein bL28 (98 aa).

It belongs to the bacterial ribosomal protein bL28 family.

This is Large ribosomal subunit protein bL28 from Bartonella bacilliformis (strain ATCC 35685 / KC583 / Herrer 020/F12,63).